Reading from the N-terminus, the 366-residue chain is UDP-GlcNAc:ribostamycin N-acetylglucosaminyltransferase (366 aa).

Residues Ala342–Gly352 show a composition bias toward low complexity. The disordered stretch occupies residues Ala342–Gly366. Residues Arg357–Gly366 show a composition bias toward basic and acidic residues.

This sequence belongs to the glycosyltransferase group 1 family. Glycosyltransferase 4 subfamily. A divalent metal cation serves as cofactor.

It carries out the reaction ribostamycin + UDP-N-acetyl-alpha-D-glucosamine = 2'''-acetyl-6'''-hydroxyneomycin C + UDP + H(+). It participates in antibiotic biosynthesis; neomycin biosynthesis. Glycosyltransferase involved in the biosynthesis of neomycin by mediating glycosylation of ribostamycin with UDP-GlcNAc as a sugar donor to generate 2'''-acetyl-6'''-hydroxyneomycin C. The polypeptide is UDP-GlcNAc:ribostamycin N-acetylglucosaminyltransferase (neoK) (Streptomyces fradiae (Streptomyces roseoflavus)).